The primary structure comprises 253 residues: Adenosylcobinamide-GDP ribazoletransferase (253 aa).

Transmembrane regions (helical) follow at residues 33 to 53 (ISPI…YLIL), 106 to 126 (VGSG…VALL), 132 to 152 (LYTI…SLYI), and 178 to 198 (ILLL…FIIF).

The protein belongs to the CobS family. It depends on Mg(2+) as a cofactor.

The protein resides in the cell membrane. It carries out the reaction alpha-ribazole + adenosylcob(III)inamide-GDP = adenosylcob(III)alamin + GMP + H(+). It catalyses the reaction alpha-ribazole 5'-phosphate + adenosylcob(III)inamide-GDP = adenosylcob(III)alamin 5'-phosphate + GMP + H(+). It functions in the pathway cofactor biosynthesis; adenosylcobalamin biosynthesis; adenosylcobalamin from cob(II)yrinate a,c-diamide: step 7/7. Its function is as follows. Joins adenosylcobinamide-GDP and alpha-ribazole to generate adenosylcobalamin (Ado-cobalamin). Also synthesizes adenosylcobalamin 5'-phosphate from adenosylcobinamide-GDP and alpha-ribazole 5'-phosphate. This Saccharolobus solfataricus (strain ATCC 35092 / DSM 1617 / JCM 11322 / P2) (Sulfolobus solfataricus) protein is Adenosylcobinamide-GDP ribazoletransferase.